The following is a 100-amino-acid chain: Probable DNA-binding protein HU (100 aa).

Belongs to the bacterial histone-like protein family.

Functionally, histone-like DNA-binding protein which is capable of wrapping DNA to stabilize it, and thus to prevent its denaturation under extreme environmental conditions. The polypeptide is Probable DNA-binding protein HU (hup) (Chlamydia pneumoniae (Chlamydophila pneumoniae)).